The primary structure comprises 228 residues: Phosphatidylserine decarboxylase proenzyme (228 aa).

S197 acts as the Schiff-base intermediate with substrate; via pyruvic acid in catalysis. Pyruvic acid (Ser); by autocatalysis is present on S197.

Belongs to the phosphatidylserine decarboxylase family. PSD-A subfamily. As to quaternary structure, heterodimer of a large membrane-associated beta subunit and a small pyruvoyl-containing alpha subunit. Pyruvate serves as cofactor. Is synthesized initially as an inactive proenzyme. Formation of the active enzyme involves a self-maturation process in which the active site pyruvoyl group is generated from an internal serine residue via an autocatalytic post-translational modification. Two non-identical subunits are generated from the proenzyme in this reaction, and the pyruvate is formed at the N-terminus of the alpha chain, which is derived from the carboxyl end of the proenzyme. The post-translation cleavage follows an unusual pathway, termed non-hydrolytic serinolysis, in which the side chain hydroxyl group of the serine supplies its oxygen atom to form the C-terminus of the beta chain, while the remainder of the serine residue undergoes an oxidative deamination to produce ammonia and the pyruvoyl prosthetic group on the alpha chain.

Its subcellular location is the cell membrane. The catalysed reaction is a 1,2-diacyl-sn-glycero-3-phospho-L-serine + H(+) = a 1,2-diacyl-sn-glycero-3-phosphoethanolamine + CO2. It participates in phospholipid metabolism; phosphatidylethanolamine biosynthesis; phosphatidylethanolamine from CDP-diacylglycerol: step 2/2. Its function is as follows. Catalyzes the formation of phosphatidylethanolamine (PtdEtn) from phosphatidylserine (PtdSer). This is Phosphatidylserine decarboxylase proenzyme from Phocaeicola vulgatus (strain ATCC 8482 / DSM 1447 / JCM 5826 / CCUG 4940 / NBRC 14291 / NCTC 11154) (Bacteroides vulgatus).